The following is a 294-amino-acid chain: Ribosomal RNA small subunit methyltransferase H (294 aa).

Residues 37–39 (GGH), aspartate 58, leucine 93, aspartate 105, and glutamine 112 each bind S-adenosyl-L-methionine.

It belongs to the methyltransferase superfamily. RsmH family.

The protein localises to the cytoplasm. It carries out the reaction cytidine(1402) in 16S rRNA + S-adenosyl-L-methionine = N(4)-methylcytidine(1402) in 16S rRNA + S-adenosyl-L-homocysteine + H(+). In terms of biological role, specifically methylates the N4 position of cytidine in position 1402 (C1402) of 16S rRNA. This Fervidobacterium nodosum (strain ATCC 35602 / DSM 5306 / Rt17-B1) protein is Ribosomal RNA small subunit methyltransferase H.